Here is a 1187-residue protein sequence, read N- to C-terminus: DNA-directed RNA polymerase subunit beta (1187 aa).

Residues 1150–1187 (KDEDDDPASSADDLGFNIGARPDAAAKEDQKAEEPEYQ) form a disordered region. The span at 1173 to 1187 (AAAKEDQKAEEPEYQ) shows a compositional bias: basic and acidic residues.

It belongs to the RNA polymerase beta chain family. The RNAP catalytic core consists of 2 alpha, 1 beta, 1 beta' and 1 omega subunit. When a sigma factor is associated with the core the holoenzyme is formed, which can initiate transcription.

The enzyme catalyses RNA(n) + a ribonucleoside 5'-triphosphate = RNA(n+1) + diphosphate. Functionally, DNA-dependent RNA polymerase catalyzes the transcription of DNA into RNA using the four ribonucleoside triphosphates as substrates. This Bifidobacterium longum (strain NCC 2705) protein is DNA-directed RNA polymerase subunit beta.